The chain runs to 147 residues: Nucleoside diphosphate kinase (147 aa).

ATP contacts are provided by K9, F57, R85, T91, R102, and N112. H115 functions as the Pros-phosphohistidine intermediate in the catalytic mechanism.

The protein belongs to the NDK family. In terms of assembly, homotetramer. Mg(2+) is required as a cofactor.

It is found in the cytoplasm. It catalyses the reaction a 2'-deoxyribonucleoside 5'-diphosphate + ATP = a 2'-deoxyribonucleoside 5'-triphosphate + ADP. It carries out the reaction a ribonucleoside 5'-diphosphate + ATP = a ribonucleoside 5'-triphosphate + ADP. Its function is as follows. Major role in the synthesis of nucleoside triphosphates other than ATP. The ATP gamma phosphate is transferred to the NDP beta phosphate via a ping-pong mechanism, using a phosphorylated active-site intermediate. The polypeptide is Nucleoside diphosphate kinase (Thermosipho africanus (strain TCF52B)).